The chain runs to 313 residues: MVNRRKISIIGAGHTGGTLAFILAQKELGDIVLIERQQSEGMAKGKALDILESGPIWGFDTSVHGSVNIEDIKDSDIVVMTAGIPRKSGMTREELVQTNEQIVRETALQIATYAPHSIIIVLTNPVDVMTYTAFKASGFPKERIIGQSGILDAARYRTFIAQELNVSVKDVNGFVLGGHGDTMLPLINNTHINGIPVKHLISEEKIDQIVERTRKGGAEIVALLGQGSAYYAPATAIYETIDAIFNDRKRLLPSIAYLEGEYGCSDICFGVPTIIGYQGIEKIIEVDMNNDEYQQLQHSAQAVSEVKNSLKFK.

11–16 is a binding site for NAD(+); that stretch reads GAGHTG. Substrate contacts are provided by R86 and R92. NAD(+) contacts are provided by residues N99 and 122-124; that span reads LTN. Substrate contacts are provided by N124 and R155. H179 serves as the catalytic Proton acceptor.

Belongs to the LDH/MDH superfamily. MDH type 3 family.

It catalyses the reaction (S)-malate + NAD(+) = oxaloacetate + NADH + H(+). Its function is as follows. Catalyzes the reversible oxidation of malate to oxaloacetate. This is Malate dehydrogenase from Staphylococcus epidermidis (strain ATCC 35984 / DSM 28319 / BCRC 17069 / CCUG 31568 / BM 3577 / RP62A).